A 377-amino-acid chain; its full sequence is Glutamate 5-kinase (377 aa).

An ATP-binding site is contributed by K18. The substrate site is built by S59, D146, and N158. Residues 178-179 and 222-228 contribute to the ATP site; these read SD and TGGMATK. Positions 286-363 constitute a PUA domain; it reads QGWVTVDAGA…DAIEAELGFT (78 aa).

Belongs to the glutamate 5-kinase family.

The protein resides in the cytoplasm. It carries out the reaction L-glutamate + ATP = L-glutamyl 5-phosphate + ADP. It participates in amino-acid biosynthesis; L-proline biosynthesis; L-glutamate 5-semialdehyde from L-glutamate: step 1/2. In terms of biological role, catalyzes the transfer of a phosphate group to glutamate to form L-glutamate 5-phosphate. This chain is Glutamate 5-kinase, found in Caulobacter vibrioides (strain ATCC 19089 / CIP 103742 / CB 15) (Caulobacter crescentus).